Here is a 1289-residue protein sequence, read N- to C-terminus: uncharacterized protein (1289 aa).

An N-terminal signal peptide occupies residues 1–23; sequence MRKYTVIASILLSFLSVLSGGHH. The LTD domain occupies 141–277; that stretch reads EGYQADLAHI…VVISTNTGKD (137 aa).

This is an uncharacterized protein from Bacillus subtilis (strain 168).